The primary structure comprises 49 residues: Venom peptide 3 (49 aa).

Residues 1 to 23 (MRFTFVLVIAATVAVLGFFGINA) form the signal peptide. AXPX repeat units lie at residues 23-26 (AEPM) and 31-34 (AEPY). A propeptide spanning residues 24–37 (EPMPDPHAEPYPDA) is cleaved from the precursor. Position 48 is a leucine amide (leucine 48).

Expressed by the venom gland.

The protein resides in the secreted. This chain is Venom peptide 3, found in Eumenes pomiformis (Potter wasp).